A 279-amino-acid polypeptide reads, in one-letter code: Undecaprenyl-diphosphatase (279 aa).

8 helical membrane passes run 1 to 21, 39 to 59, 96 to 116, 128 to 148, 155 to 175, 201 to 221, 231 to 251, and 259 to 279; these read MVLEAVLLGIVQGITEFLPIS, GRFFLSSVQLGTSFALILYFF, LLLVTGTIPVVLLGFLLVRFV, FTMGVALIVFGLLLGFADALF, IFQITFIESVLIGAAQVFAII, FSFLLSLPVTFIGGMYGLVAG, YSLIGAIVSFVVGLLVVSALL, and FVLFVYYRVLFGLFLVIVSFF.

Belongs to the UppP family.

Its subcellular location is the cell membrane. It catalyses the reaction di-trans,octa-cis-undecaprenyl diphosphate + H2O = di-trans,octa-cis-undecaprenyl phosphate + phosphate + H(+). Catalyzes the dephosphorylation of undecaprenyl diphosphate (UPP). Confers resistance to bacitracin. This chain is Undecaprenyl-diphosphatase, found in Tropheryma whipplei (strain Twist) (Whipple's bacillus).